We begin with the raw amino-acid sequence, 737 residues long: Catalase-peroxidase (737 aa).

Positions 1–29 (MTDSPDATTGGCPVAHGDRLPHPTQGGAN) are disordered. A cross-link (tryptophyl-tyrosyl-methioninium (Trp-Tyr) (with M-253)) is located at residues 101-227 (WHSAGTYRVS…LGATHMGLIY (127 aa)). His-102 functions as the Proton acceptor in the catalytic mechanism. Residues 227-253 (YVNPEGPEGKPDPVAAARDIRETFGRM) constitute a cross-link (tryptophyl-tyrosyl-methioninium (Tyr-Met) (with W-101)). His-268 contributes to the heme b binding site.

Belongs to the peroxidase family. Peroxidase/catalase subfamily. Homodimer or homotetramer. It depends on heme b as a cofactor. Post-translationally, formation of the three residue Trp-Tyr-Met cross-link is important for the catalase, but not the peroxidase activity of the enzyme.

It carries out the reaction H2O2 + AH2 = A + 2 H2O. The enzyme catalyses 2 H2O2 = O2 + 2 H2O. Bifunctional enzyme with both catalase and broad-spectrum peroxidase activity. The polypeptide is Catalase-peroxidase (Saccharopolyspora erythraea (strain ATCC 11635 / DSM 40517 / JCM 4748 / NBRC 13426 / NCIMB 8594 / NRRL 2338)).